Here is a 357-residue protein sequence, read N- to C-terminus: 3-isopropylmalate dehydrogenase (357 aa).

NAD(+) is bound at residue 75–88 (GPKWDTLPPAERPE). Substrate-binding residues include Arg-96, Arg-106, Arg-134, and Asp-222. Positions 222, 246, and 250 each coordinate Mg(2+). Position 279 to 291 (279 to 291 (GSAPDIAGQQKAN)) interacts with NAD(+).

Belongs to the isocitrate and isopropylmalate dehydrogenases family. LeuB type 1 subfamily. In terms of assembly, homodimer. It depends on Mg(2+) as a cofactor. Mn(2+) is required as a cofactor.

Its subcellular location is the cytoplasm. It catalyses the reaction (2R,3S)-3-isopropylmalate + NAD(+) = 4-methyl-2-oxopentanoate + CO2 + NADH. Its pathway is amino-acid biosynthesis; L-leucine biosynthesis; L-leucine from 3-methyl-2-oxobutanoate: step 3/4. Catalyzes the oxidation of 3-carboxy-2-hydroxy-4-methylpentanoate (3-isopropylmalate) to 3-carboxy-4-methyl-2-oxopentanoate. The product decarboxylates to 4-methyl-2 oxopentanoate. The protein is 3-isopropylmalate dehydrogenase of Moorella thermoacetica (strain ATCC 39073 / JCM 9320).